Consider the following 354-residue polypeptide: uncharacterized protein (354 aa).

Disordered stretches follow at residues 1–74 and 87–115; these read MGTK…ENCR and SESG…QRAS. K19 is subject to N6-acetyllysine. A compositionally biased stretch (low complexity) spans 32 to 41; it reads EGPSSNSSFH. The segment covering 45–54 has biased composition (acidic residues); that stretch reads EEGTDLEGDM. Phosphoserine is present on residues S115 and S174. Residues 182 to 199 show a composition bias toward polar residues; it reads QGSSQDLPMQANLSQSNE. Disordered regions lie at residues 182 to 208 and 235 to 298; these read QGSS…GRDR and QVAD…DELS. A Phosphotyrosine modification is found at Y291. S292 bears the Phosphoserine mark.

This is an uncharacterized protein from Mus musculus (Mouse).